Here is a 593-residue protein sequence, read N- to C-terminus: Chromosomal replication initiator protein DnaA (593 aa).

Residues 1-71 (MSDPCWEQCV…EIISNSDAGP (71 aa)) are domain I, interacts with DnaA modulators. A domain II region spans residues 71-256 (PKSLEIAVAQ…DVEGGIQHKH (186 aa)). Positions 97-186 (AVPVPDPLPS…STESSADRER (90 aa)) are disordered. The segment covering 113–124 (SFQPPKGNTSAD) has biased composition (polar residues). The segment at 257-473 (NLNTTFIFDN…GALKRVIANA (217 aa)) is domain III, AAA+ region. ATP-binding residues include Gly301, Gly303, Lys304, and Thr305. Residues 474–593 (QFTQRSISVE…VKNLLRTLTT (120 aa)) form a domain IV, binds dsDNA region.

Belongs to the DnaA family. Oligomerizes as a right-handed, spiral filament on DNA at oriC.

The protein localises to the cytoplasm. Functionally, plays an essential role in the initiation and regulation of chromosomal replication. ATP-DnaA binds to the origin of replication (oriC) to initiate formation of the DNA replication initiation complex once per cell cycle. Binds the DnaA box (a 9 base pair repeat at the origin) and separates the double-stranded (ds)DNA. Forms a right-handed helical filament on oriC DNA; dsDNA binds to the exterior of the filament while single-stranded (ss)DNA is stabiized in the filament's interior. The ATP-DnaA-oriC complex binds and stabilizes one strand of the AT-rich DNA unwinding element (DUE), permitting loading of DNA polymerase. After initiation quickly degrades to an ADP-DnaA complex that is not apt for DNA replication. Binds acidic phospholipids. This chain is Chromosomal replication initiator protein DnaA, found in Teredinibacter turnerae (strain ATCC 39867 / T7901).